A 207-amino-acid polypeptide reads, in one-letter code: Urease accessory protein UreG (207 aa).

G16 to T23 serves as a coordination point for GTP.

Belongs to the SIMIBI class G3E GTPase family. UreG subfamily. In terms of assembly, homodimer. UreD, UreF and UreG form a complex that acts as a GTP-hydrolysis-dependent molecular chaperone, activating the urease apoprotein by helping to assemble the nickel containing metallocenter of UreC. The UreE protein probably delivers the nickel.

Its subcellular location is the cytoplasm. In terms of biological role, facilitates the functional incorporation of the urease nickel metallocenter. This process requires GTP hydrolysis, probably effectuated by UreG. In Shewanella halifaxensis (strain HAW-EB4), this protein is Urease accessory protein UreG.